The following is an 872-amino-acid chain: Probable GPI-anchored adhesin-like protein PGA25 (872 aa).

A signal peptide spans 1–19; the sequence is MKVTAVSSVLLTVAALTNA. Low complexity predominate over residues 43-65; sequence PAAAPAAQPAAQPTTQSPADQPT. Disordered regions lie at residues 43-383, 492-517, and 623-809; these read PAAA…TIIP, KPTGSGSITVLPTKSTTTDDDDDETD, and PDDW…ECDT. Residues 66–83 show a composition bias toward polar residues; the sequence is VQSPVSSDQPSTAQPVAQ. 2 stretches are compositionally biased toward low complexity: residues 84–110 and 125–171; these read NNLLLDSSNSTLVVPSSSKSSTTTRST and SSEA…SSSS. N92 carries an N-linked (GlcNAc...) asparagine glycan. Acidic residues predominate over residues 196-207; that stretch reads ETDDEDCVEETE. Low complexity-rich tracts occupy residues 208–225, 242–260, and 274–293; these read SPTSAPASAPTTSKVATT, SSAPISSAESSPTVASSTT, and SSVPSSSAETSTTVASNTTT. An N-linked (GlcNAc...) asparagine glycan is attached at N290. Positions 317–328 are enriched in acidic residues; the sequence is AEEDDEECEDPT. Low complexity predominate over residues 349-363; that stretch reads TSQSKTSVSSVVSKS. Positions 366–376 are enriched in acidic residues; that stretch reads EDDDDETECET. Polar residues predominate over residues 495–506; it reads GSGSITVLPTKS. Acidic residues-rich tracts occupy residues 624–635 and 646–659; these read DDWEDDGYEGED and DDGEWEWYEEDDGE. Composition is skewed to gly residues over residues 666–692, 701–710, and 731–740; these read SSSGSGTGSWWGSGAGSSGGTTSGSGS, SSGGTWGGSG, and SWWGGSGSGS. Positions 741-760 are enriched in low complexity; it reads SSGSSSGVSSGDSGSSSVTG. The span at 761-771 shows a compositional bias: gly residues; it reads GSSGSWWGGSG. The span at 780-808 shows a compositional bias: acidic residues; the sequence is DGYDDEDDQTPEPECDDEDDSWDDDEECD. A lipid anchor (GPI-anchor amidated alanine) is attached at A845. A propeptide spans 846-872 (removed in mature form); that stretch reads QSVTQIENIGGKVSASGLFVVLGLLLI.

This sequence belongs to the HYR1/IFF family. Post-translationally, the GPI-anchor is attached to the protein in the endoplasmic reticulum and serves to target the protein to the cell surface. There, the glucosamine-inositol phospholipid moiety is cleaved off and the GPI-modified mannoprotein is covalently attached via its lipidless GPI glycan remnant to the 1,6-beta-glucan of the outer cell wall layer.

Its subcellular location is the secreted. It localises to the cell wall. It is found in the membrane. Probable GPI-anchored cell wall protein involved in cell wall organization, hyphal growth, as well as in host-fungal interaction and virulence. The sequence is that of Probable GPI-anchored adhesin-like protein PGA25 (PGA25) from Candida albicans (strain SC5314 / ATCC MYA-2876) (Yeast).